The chain runs to 122 residues: Small ribosomal subunit protein uS13 (122 aa).

Residues 99–122 (RGQRTHTNARTRKGPAKAIAGKKK) are disordered.

It belongs to the universal ribosomal protein uS13 family. As to quaternary structure, part of the 30S ribosomal subunit. Forms a loose heterodimer with protein S19. Forms two bridges to the 50S subunit in the 70S ribosome.

Its function is as follows. Located at the top of the head of the 30S subunit, it contacts several helices of the 16S rRNA. In the 70S ribosome it contacts the 23S rRNA (bridge B1a) and protein L5 of the 50S subunit (bridge B1b), connecting the 2 subunits; these bridges are implicated in subunit movement. Contacts the tRNAs in the A and P-sites. This Rhizobium etli (strain CIAT 652) protein is Small ribosomal subunit protein uS13.